The primary structure comprises 142 residues: D-aminoacyl-tRNA deacylase (142 aa).

The Gly-cisPro motif, important for rejection of L-amino acids motif lies at 133–134 (GP).

The protein belongs to the DTD family. Homodimer.

It localises to the cytoplasm. It carries out the reaction glycyl-tRNA(Ala) + H2O = tRNA(Ala) + glycine + H(+). It catalyses the reaction a D-aminoacyl-tRNA + H2O = a tRNA + a D-alpha-amino acid + H(+). In terms of biological role, an aminoacyl-tRNA editing enzyme that deacylates mischarged D-aminoacyl-tRNAs. Also deacylates mischarged glycyl-tRNA(Ala), protecting cells against glycine mischarging by AlaRS. Acts via tRNA-based rather than protein-based catalysis; rejects L-amino acids rather than detecting D-amino acids in the active site. By recycling D-aminoacyl-tRNA to D-amino acids and free tRNA molecules, this enzyme counteracts the toxicity associated with the formation of D-aminoacyl-tRNA entities in vivo and helps enforce protein L-homochirality. This chain is D-aminoacyl-tRNA deacylase, found in Acidothermus cellulolyticus (strain ATCC 43068 / DSM 8971 / 11B).